Reading from the N-terminus, the 217-residue chain is NADPH-dependent 3-demethoxyubiquinone 3-hydroxylase, mitochondrial (217 aa).

Residues 1-35 (MSCAGAAAAPRLWRLRPGARRSLSAYGRRTSVRFR) constitute a mitochondrion transit peptide. Residues 11–29 (RLWRLRPGARRSLSAYGRR) are required for nuclear localization. Repeat copies occupy residues 48–129 (AVDR…TALL) and 130–217 (GKEG…SERL). Residues 48 to 217 (AVDRIIRVDH…RVAIYLSERL (170 aa)) form a 2 X approximate tandem repeats region. Arg-51 contributes to the NADH binding site. Fe cation is bound by residues Glu-60, Glu-90, His-93, Glu-142, Glu-178, and His-181. NADH-binding residues include Tyr-212 and Arg-216.

This sequence belongs to the COQ7 family. As to quaternary structure, component of a multi-subunit COQ enzyme complex. Interacts with COQ8B and COQ6. Interacts with COQ9. Requires Fe cation as cofactor. In terms of tissue distribution, expressed dominantly in heart and skeletal muscle.

It is found in the mitochondrion inner membrane. The protein localises to the mitochondrion. The protein resides in the nucleus. It localises to the chromosome. The catalysed reaction is a 5-methoxy-2-methyl-3-(all-trans-polyprenyl)benzoquinone + NADH + O2 = a 3-demethylubiquinone + NAD(+) + H2O. Its pathway is cofactor biosynthesis; ubiquinone biosynthesis. Functionally, catalyzes the hydroxylation of the 5-methoxy-2-methyl-3-(all-trans-polyprenyl)benzoquinone at the C6 position and participates in the biosynthesis of ubiquinone. Catalyzes the reaction through a substrate-mediated reduction pathway, whereby NADH shuttles electrons to 5-methoxy-2-methyl-3-(all-trans-decaprenyl)benzoquinone, which then transfers the electrons to the two Fe(3+) centers. The binding of 5-methoxy-2-methyl-3-(all-trans-polyprenyl)benzoquinone (DMQn) mediates reduction of the diiron center by nicotinamide adenine dinucleotide (NADH) and initiates oxygen activation for subsequent DMQ hydroxylation. The physiological substrates are 5-methoxy-2-methyl-3-(all-trans-nonaprenyl)benzoquinone (DMQ(9)) and 5-methoxy-2-methyl-3-(all-trans-decaprenyl)benzoquinone (DMQ(10)), however in vitro the enzyme does not have any specificity concerning the length of the polyprenyl tail, and accepts tails of various lengths with similar efficiency. Also has a structural role in the COQ enzyme complex, stabilizing other COQ polypeptides. Involved in lifespan determination in a ubiquinone-independent manner. Plays a role in modulating mitochondrial stress responses, acting in the nucleus, perhaps via regulating gene expression, independent of its characterized mitochondrial function in ubiquinone biosynthesis. The sequence is that of NADPH-dependent 3-demethoxyubiquinone 3-hydroxylase, mitochondrial from Homo sapiens (Human).